The chain runs to 397 residues: MSMNWWRDGAAKKRMDESSAVKLQQQQCVALIVGVTGLVGNSLAEMLPLSDTPGGPWKVYGVARRPRPSWNEDHPINYISCDVSNTAEVEAKLPPLSDVTHIFYATWTSRSSEEENCEANGKMLKNVLDTMIPNCPNLKHICLQTGRFHYVASVVDWKINGSHDTPLTEDLPRLNTNNFYYTQEDILLEEVKRKEGLTWSVHRPGTIFGFSPYSMMNLVGTLCVYAAICKQEGAVLRFPGCKGAWDGYSDCADADLIAEHYIWAALDPHAKNQSFNVSNGDVFKWKHLWKVLAEQFGVECGGYEYEEGQQVRLQDVMKDKGPVWDKIVRENGLSNTKLEDVGKWWFSDTILWNECRLDSMNKSKEHGFLGFRNSKNCFLYWIHKLKAYKIVPSSTIS.

NADP(+)-binding positions include 36 to 38 (TGL), 64 to 65 (RR), 82 to 83 (DV), 106 to 107 (TW), Gln-144, Tyr-180, Ile-207, and 214 to 216 (SMM). Residue Tyr-180 is part of the active site.

This sequence belongs to the short-chain dehydrogenases/reductases (SDR) family.

The catalysed reaction is (S)-8-oxocitronellyl enol + NADP(+) = (6E)-8-oxogeranial + NADPH + H(+). It carries out the reaction (S)-8-oxocitronellyl enol + NAD(+) = (6E)-8-oxogeranial + NADH + H(+). Functionally, iridoid synthase that catalyzes the first step in generation of the iridoid ring scaffold using the linear monoterpene (6E)-8-oxogeranial as substrate. Iridoids comprise a large family of distinctive bicyclic monoterpenes that possess a wide range of pharmacological activities, including anticancer, anti-inflammatory, antifungal and antibacterial activities. Catalyzes the conversion of the linear monoterpene (6E)-8-oxogeranial to (S)-8-oxocitronellyl enol, a precursor of nepetalactones, which are metabolites that are both insect-repellent and have euphoric effect in cats. In Nepeta cataria (Catnip), this protein is (S)-8-oxocitronellyl enol synthase ISY2.